A 169-amino-acid chain; its full sequence is Protein yop1 (169 aa).

The Cytoplasmic portion of the chain corresponds to 1–35; that stretch reads MASFQDRAQHTIAQLDKELSKYPVLNNLERQTSVP. A helical transmembrane segment spans residues 36–55; that stretch reads KVYVILGLVGIYTFLVFFNI. A topological domain (lumenal) is located at residue Ala56. Residues 57–76 traverse the membrane as a helical segment; sequence GEFLVNFAGFLIPGYYSLNA. The Cytoplasmic segment spans residues 77 to 86; it reads LFTSGKADDT. The chain crosses the membrane as a helical span at residues 87–103; the sequence is QWLTYWVVYALLTVVES. The Lumenal segment spans residues 104 to 105; it reads AI. A helical transmembrane segment spans residues 106–124; the sequence is NAAYWFPFYYIFKFVLILW. Residues 125 to 169 are Cytoplasmic-facing; that stretch reads MSLPQTNGAQVVFHSFLQPVLGRFFTSGSTSANLRAQADAASKSQ.

Belongs to the DP1 family. In terms of assembly, oligomer.

Its subcellular location is the endoplasmic reticulum membrane. It localises to the golgi apparatus membrane. Required to generate and maintain the structure of the tubular endoplasmic reticulum network and the vacuole. Induces high curvature in membranes and causes membrane tubule formation. Involved in membrane/vesicle trafficking. The polypeptide is Protein yop1 (yop1) (Aspergillus fumigatus (strain ATCC MYA-4609 / CBS 101355 / FGSC A1100 / Af293) (Neosartorya fumigata)).